The chain runs to 466 residues: Phytase A (466 aa).

Residues 1–19 (MGVFVVLLSIATLFGSTSG) form the signal peptide. Residue N27 is glycosylated (N-linked (GlcNAc...) asparagine). The cysteines at positions 31 and 40 are disulfide-linked. Residues Y51, R81, H82, R85, and T88 each coordinate 1D-myo-inositol hexakisphosphate. 4 disulfides stabilise this stretch: C71–C414, C215–C465, C264–C282, and C436–C444. H82 functions as the Nucleophile in the catalytic mechanism. Residues N105 and N120 are each glycosylated (N-linked (GlcNAc...) asparagine). R165 contributes to the 1D-myo-inositol hexakisphosphate binding site. N207 and N230 each carry an N-linked (GlcNAc...) asparagine glycan. K301 is a 1D-myo-inositol hexakisphosphate binding site. Residues N339 and N352 are each glycosylated (N-linked (GlcNAc...) asparagine). The 1D-myo-inositol hexakisphosphate site is built by H361 and D362. N-linked (GlcNAc...) asparagine glycosylation occurs at N376.

Belongs to the histidine acid phosphatase family. As to quaternary structure, monomer.

The protein localises to the secreted. The catalysed reaction is 1D-myo-inositol hexakisphosphate + H2O = 1D-myo-inositol 1,2,4,5,6-pentakisphosphate + phosphate. It carries out the reaction 1D-myo-inositol 1,2,4,5,6-pentakisphosphate + H2O = 1D-myo-inositol 1,2,5,6-tetrakisphosphate + phosphate. The enzyme catalyses 1D-myo-inositol 1,2,5,6-tetrakisphosphate + H2O = 1D-myo-inositol 1,2,6-trisphosphate + phosphate. It catalyses the reaction 1D-myo-inositol 1,2,6-trisphosphate + H2O = 1D-myo-inositol 1,2-bisphosphate + phosphate. The catalysed reaction is 1D-myo-inositol 1,2-bisphosphate + H2O = 1D-myo-inositol 2-phosphate + phosphate. Catalyzes the phosphate monoester hydrolysis of phytic acid (myo-inositol hexakisphosphate), which results in the stepwise formation of myo-inositol pentakis-, tetrakis-, tris-, bis-, and monophosphates, as well as the liberation of inorganic phosphate. Myo-inositol 2-monophosphate is the end product. Has a broad substrate specificity and is also able to dephosphorylate other classic acid phosphatase substrates such as p-nitrophenyl phosphate, phenyl phosphate, fructose 1,6-bisphosphate, glucose 6-phosphate, 3-phosphoglycerate, as well as ADP and ATP. This Aspergillus terreus protein is Phytase A.